Reading from the N-terminus, the 170-residue chain is Probable calcium-binding protein CML29 (170 aa).

EF-hand domains lie at 27–62 (SYIS…LGLD), 63–98 (KPEH…GQLG), and 138–170 (ASVE…AQLL). Residues Asp-40, Asp-42, Asp-44, Glu-51, Asp-76, Asp-78, Asp-80, Lys-82, Glu-87, Asp-151, Asp-153, Asp-155, and Glu-162 each contribute to the Ca(2+) site.

Its function is as follows. Potential calcium sensor. The protein is Probable calcium-binding protein CML29 (CML29) of Oryza sativa subsp. japonica (Rice).